The primary structure comprises 195 residues: Protein GrpE (195 aa).

Over residues 1–20 (MSSKEQKTPDEQVLDQKEAA) the composition is skewed to basic and acidic residues. The interval 1-40 (MSSKEQKTPDEQVLDQKEAAKGQQADAAPETADVADPRDE) is disordered.

It belongs to the GrpE family. As to quaternary structure, homodimer.

The protein resides in the cytoplasm. Its function is as follows. Participates actively in the response to hyperosmotic and heat shock by preventing the aggregation of stress-denatured proteins, in association with DnaK and GrpE. It is the nucleotide exchange factor for DnaK and may function as a thermosensor. Unfolded proteins bind initially to DnaJ; upon interaction with the DnaJ-bound protein, DnaK hydrolyzes its bound ATP, resulting in the formation of a stable complex. GrpE releases ADP from DnaK; ATP binding to DnaK triggers the release of the substrate protein, thus completing the reaction cycle. Several rounds of ATP-dependent interactions between DnaJ, DnaK and GrpE are required for fully efficient folding. This Pectobacterium atrosepticum (strain SCRI 1043 / ATCC BAA-672) (Erwinia carotovora subsp. atroseptica) protein is Protein GrpE.